Reading from the N-terminus, the 607-residue chain is DNA primase (607 aa).

Residues 39–63 form a CHC2-type zinc finger; that stretch reads CPFHDDKNPSMSISSSKNIFKCWAC. Residues 267-350 enclose the Toprim domain; sequence NQLFIVEGYF…IVEIVQWEHN (84 aa). Mg(2+) contacts are provided by E273, D319, and D321.

It belongs to the DnaG primase family. As to quaternary structure, monomer. Interacts with DnaB. The cofactor is Zn(2+). Requires Mg(2+) as cofactor.

The catalysed reaction is ssDNA + n NTP = ssDNA/pppN(pN)n-1 hybrid + (n-1) diphosphate.. Its function is as follows. RNA polymerase that catalyzes the synthesis of short RNA molecules used as primers for DNA polymerase during DNA replication. This chain is DNA primase, found in Mycoplasma genitalium (strain ATCC 33530 / DSM 19775 / NCTC 10195 / G37) (Mycoplasmoides genitalium).